The primary structure comprises 345 residues: NADPH dehydrogenase (345 aa).

An FMN-binding site is contributed by Ser23–Cys26. A substrate-binding site is contributed by Tyr28. Ala60 and Gln102 together coordinate FMN. His164 to His167 lines the substrate pocket. Residues Arg215 and Gly307–Arg308 contribute to the FMN site.

This sequence belongs to the NADH:flavin oxidoreductase/NADH oxidase family. NamA subfamily. In terms of assembly, homotetramer. Requires FMN as cofactor.

It carries out the reaction A + NADPH + H(+) = AH2 + NADP(+). In terms of biological role, catalyzes the reduction of the double bond of an array of alpha,beta-unsaturated aldehydes and ketones. It also reduces the nitro group of nitroester and nitroaromatic compounds. It could have a role in detoxification processes. This Bacillus mycoides (strain KBAB4) (Bacillus weihenstephanensis) protein is NADPH dehydrogenase.